The sequence spans 294 residues: Putative glutamine amidotransferase HI_1037 (294 aa).

Residue Cys18 is part of the active site. The region spanning 18–266 (CQLLGMNCNT…NGGFVFFKNG (249 aa)) is the Glutamine amidotransferase type-2 domain.

This chain is Putative glutamine amidotransferase HI_1037, found in Haemophilus influenzae (strain ATCC 51907 / DSM 11121 / KW20 / Rd).